Consider the following 116-residue polypeptide: Large ribosomal subunit protein eL30 (116 aa).

The protein belongs to the eukaryotic ribosomal protein eL30 family. In terms of assembly, component of the large ribosomal subunit.

Its subcellular location is the cytoplasm. Component of the large ribosomal subunit. The ribosome is a large ribonucleoprotein complex responsible for the synthesis of proteins in the cell. The sequence is that of Large ribosomal subunit protein eL30 (rpl30) from Ictalurus punctatus (Channel catfish).